Reading from the N-terminus, the 489-residue chain is Homoserine O-acetyltransferase (489 aa).

In terms of domain architecture, AB hydrolase-1 spans 69 to 438 (LLLCHALSGS…AEGHDGFLLE (370 aa)). The active-site Nucleophile is Ser-163. The disordered stretch occupies residues 255 to 329 (ASRHPYPDRL…QTTDSSSLNQ (75 aa)). Positions 280–290 (EGNRNRRERPC) are enriched in basic and acidic residues. The segment covering 299–329 (SESALNSPASSVSSLPSLGASQTTDSSSLNQ) has biased composition (low complexity). Residues Asp-403 and His-432 contribute to the active site.

This sequence belongs to the AB hydrolase superfamily. MetX family.

The protein resides in the cytoplasm. It carries out the reaction L-homoserine + acetyl-CoA = O-acetyl-L-homoserine + CoA. It functions in the pathway amino-acid biosynthesis; L-methionine biosynthesis via de novo pathway; O-acetyl-L-homoserine from L-homoserine: step 1/1. Its function is as follows. Commits homoserine to the methionine biosynthesis pathway by catalyzing its O-acetylation. This is Homoserine O-acetyltransferase (met6) from Schizosaccharomyces pombe (strain 972 / ATCC 24843) (Fission yeast).